The chain runs to 194 residues: Outer membrane protein A (194 aa).

The N-terminal stretch at 1 to 24 (MNKPSKFALALAFAAVTASGVASA) is a signal peptide. The chain crosses the membrane as a beta stranded span at residues 30–38 (WRNPYGNVW). The region spanning 77–193 (MAAKVVFNAD…RVEIEIVGSR (117 aa)) is the OmpA-like domain.

The protein belongs to the outer membrane OOP (TC 1.B.6) superfamily.

Its subcellular location is the cell outer membrane. In terms of biological role, structural protein that may protect the integrity of the bacterium. The polypeptide is Outer membrane protein A (Bordetella avium).